The chain runs to 383 residues: Acetylornithine deacetylase (383 aa).

Zn(2+) is bound at residue His80. The active site involves Asp82. Position 112 (Asp112) interacts with Zn(2+). The active site involves Glu144. Positions 145, 169, and 355 each coordinate Zn(2+).

This sequence belongs to the peptidase M20A family. ArgE subfamily. In terms of assembly, homodimer. It depends on Zn(2+) as a cofactor. Requires Co(2+) as cofactor. The cofactor is glutathione.

Its subcellular location is the cytoplasm. It carries out the reaction N(2)-acetyl-L-ornithine + H2O = L-ornithine + acetate. The protein operates within amino-acid biosynthesis; L-arginine biosynthesis; L-ornithine from N(2)-acetyl-L-ornithine (linear): step 1/1. Catalyzes the hydrolysis of the amide bond of N(2)-acetylated L-amino acids. Cleaves the acetyl group from N-acetyl-L-ornithine to form L-ornithine, an intermediate in L-arginine biosynthesis pathway, and a branchpoint in the synthesis of polyamines. The chain is Acetylornithine deacetylase from Escherichia coli (strain K12 / MC4100 / BW2952).